Consider the following 465-residue polypeptide: Macrophage metalloelastase (465 aa).

An N-terminal signal peptide occupies residues 1 to 21 (MKFLLVLVLLVSLQVSACGAA). Residues 22–101 (PMNESEFAEW…DVQHLRAVPQ (80 aa)) constitute a propeptide, activation peptide. Positions 86-93 (SRCGVPDV) match the Cysteine switch motif. Residue Cys88 participates in Zn(2+) binding. Residues Asp120 and Asp154 each coordinate Ca(2+). 2 residues coordinate Zn(2+): His164 and Asp166. The Ca(2+) site is built by Asp171, Gly172, Gly174, and Thr176. His179 is a binding site for Zn(2+). Gly186 and Asp190 together coordinate Ca(2+). His192 contributes to the Zn(2+) binding site. Asp194, Glu195, and Glu197 together coordinate Ca(2+). His214 contacts Zn(2+). Residue Glu215 is part of the active site. 2 residues coordinate Zn(2+): His218 and His224. A disulfide bridge links Cys278 with Cys465. Hemopexin repeat units follow at residues 281–324 (SLSF…WPTI), 325–371 (PSGI…GFPA), 373–421 (VKKI…FPGI), and 422–465 (RPKI…WFGC). Ca(2+) is bound at residue Asp285. Asn313 carries an N-linked (GlcNAc...) asparagine glycan. Ca(2+) is bound by residues Asp377 and Asp426.

It belongs to the peptidase M10A family. Ca(2+) serves as cofactor. Requires Zn(2+) as cofactor.

The protein localises to the secreted. Its subcellular location is the extracellular space. It is found in the extracellular matrix. The catalysed reaction is Hydrolysis of soluble and insoluble elastin. Specific cleavages are also produced at 14-Ala-|-Leu-15 and 16-Tyr-|-Leu-17 in the B chain of insulin.. Functionally, may be involved in tissue injury and remodeling. Has significant elastolytic activity. Can accept large and small amino acids at the P1' site, but has a preference for leucine. Aromatic or hydrophobic residues are preferred at the P1 site, with small hydrophobic residues (preferably alanine) occupying P3. The sequence is that of Macrophage metalloelastase (Mmp12) from Rattus norvegicus (Rat).